The chain runs to 277 residues: MEADKKTTAQTESNRDLSEQIKKVTKDVHVRAESTELMLSFQRGQVTLQQYKLLLCSLYEIYLALEEEMDRNCDHPSVAPIYFPAELARLATIEKDLEFFFGPDWREKIVVPAATERYCHRIRQIGQENPEYLIAHAYTRYLGDLSGGQVLGRIAQKSMKLGGSEGLSFFAFPGVSSPNLFKRLYRSRMNSVELTEEQRSAVLQEALGAFEFNIQVFEDLQKMLNVTENEPGVGTPRSRPATTLQVGGSMIQTNPLFRMVLGLCLALATVSIGLYAL.

His29 is a heme b binding site.

This sequence belongs to the heme oxygenase family.

Its subcellular location is the microsome. The protein resides in the endoplasmic reticulum. The enzyme catalyses heme b + 3 reduced [NADPH--hemoprotein reductase] + 3 O2 = biliverdin IXalpha + CO + Fe(2+) + 3 oxidized [NADPH--hemoprotein reductase] + 3 H2O + H(+). Functionally, heme oxygenase cleaves the heme ring at the alpha methene bridge to form biliverdin. Biliverdin is subsequently converted to bilirubin by biliverdin reductase. Under physiological conditions, the activity of heme oxygenase is highest in the spleen, where senescent erythrocytes are sequestrated and destroyed. This is Heme oxygenase (hmox) from Takifugu rubripes (Japanese pufferfish).